A 410-amino-acid chain; its full sequence is UDP-N-acetylglucosamine--N-acetylmuramyl-(pentapeptide) pyrophosphoryl-undecaprenol N-acetylglucosamine transferase (410 aa).

The interval 1 to 34 (MKDTVSQPAGGRGATAPRPADAASPSCGSSPSAD) is disordered. Low complexity predominate over residues 14–34 (ATAPRPADAASPSCGSSPSAD). UDP-N-acetyl-alpha-D-glucosamine is bound by residues 45–47 (TAG), N167, R204, S238, and Q334.

The protein belongs to the glycosyltransferase 28 family. MurG subfamily.

The protein resides in the cell membrane. It catalyses the reaction di-trans,octa-cis-undecaprenyl diphospho-N-acetyl-alpha-D-muramoyl-L-alanyl-D-glutamyl-meso-2,6-diaminopimeloyl-D-alanyl-D-alanine + UDP-N-acetyl-alpha-D-glucosamine = di-trans,octa-cis-undecaprenyl diphospho-[N-acetyl-alpha-D-glucosaminyl-(1-&gt;4)]-N-acetyl-alpha-D-muramoyl-L-alanyl-D-glutamyl-meso-2,6-diaminopimeloyl-D-alanyl-D-alanine + UDP + H(+). It functions in the pathway cell wall biogenesis; peptidoglycan biosynthesis. Functionally, cell wall formation. Catalyzes the transfer of a GlcNAc subunit on undecaprenyl-pyrophosphoryl-MurNAc-pentapeptide (lipid intermediate I) to form undecaprenyl-pyrophosphoryl-MurNAc-(pentapeptide)GlcNAc (lipid intermediate II). The protein is UDP-N-acetylglucosamine--N-acetylmuramyl-(pentapeptide) pyrophosphoryl-undecaprenol N-acetylglucosamine transferase of Mycobacterium bovis (strain ATCC BAA-935 / AF2122/97).